Here is a 210-residue protein sequence, read N- to C-terminus: MARYRGPVVKLMRREGLNLFLKNSHTLHKEKSSLEKRKYPPGLPPKKKGKITEYGAQLREKQKVKRAYGVLEKQFRRYFEEASHTPGIPGENLLQFLERRLDNVLYRMGFAVTRRQARNFVAHRHILVNGHRVDICSYRVNIGDKIEIREKFQKSAFIEENIKLAQAINRTASWVSVDYAKFSGEVLSLPTRDHIDIPVKEQVIVELYSK.

Positions 30–49 are disordered; the sequence is EKSSLEKRKYPPGLPPKKKG. The 64-residue stretch at 99 to 162 folds into the S4 RNA-binding domain; sequence RRLDNVLYRM…QKSAFIEENI (64 aa).

It belongs to the universal ribosomal protein uS4 family. In terms of assembly, part of the 30S ribosomal subunit. Contacts protein S5. The interaction surface between S4 and S5 is involved in control of translational fidelity.

Functionally, one of the primary rRNA binding proteins, it binds directly to 16S rRNA where it nucleates assembly of the body of the 30S subunit. Its function is as follows. With S5 and S12 plays an important role in translational accuracy. The chain is Small ribosomal subunit protein uS4 from Leptospira biflexa serovar Patoc (strain Patoc 1 / Ames).